Reading from the N-terminus, the 320-residue chain is Probable L-ascorbate peroxidase 5, chloroplastic (320 aa).

The N-terminal 42 residues, 1–42, are a transit peptide targeting the chloroplast; that stretch reads MAVVHRILRRGLSAASPLPSLRGLLLVSPQELGRRPASSSSS. The Proton acceptor role is filled by His80. Residue His209 coordinates heme b. K(+) is bound at residue Thr210. Positions 213–241 are disordered; that stretch reads RARPERSGWGKPETKYTENGPGAPGGQSW. Residues 214 to 228 show a composition bias toward basic and acidic residues; that stretch reads ARPERSGWGKPETKY. 2 residues coordinate K(+): Thr242 and Asp249.

Belongs to the peroxidase family. Ascorbate peroxidase subfamily. Heme b serves as cofactor. As to expression, expressed in leaves, stems and flowers.

It is found in the plastid. The protein localises to the chloroplast stroma. The catalysed reaction is L-ascorbate + H2O2 = L-dehydroascorbate + 2 H2O. In terms of biological role, plays a key role in hydrogen peroxide removal. In Oryza sativa subsp. japonica (Rice), this protein is Probable L-ascorbate peroxidase 5, chloroplastic.